The chain runs to 257 residues: Thiazole synthase (257 aa).

Lys98 functions as the Schiff-base intermediate with DXP in the catalytic mechanism. Residues Gly159, 185-186, and 207-208 contribute to the 1-deoxy-D-xylulose 5-phosphate site; these read AG and NT.

The protein belongs to the ThiG family. In terms of assembly, homotetramer. Forms heterodimers with either ThiH or ThiS.

It is found in the cytoplasm. The enzyme catalyses [ThiS sulfur-carrier protein]-C-terminal-Gly-aminoethanethioate + 2-iminoacetate + 1-deoxy-D-xylulose 5-phosphate = [ThiS sulfur-carrier protein]-C-terminal Gly-Gly + 2-[(2R,5Z)-2-carboxy-4-methylthiazol-5(2H)-ylidene]ethyl phosphate + 2 H2O + H(+). It participates in cofactor biosynthesis; thiamine diphosphate biosynthesis. Catalyzes the rearrangement of 1-deoxy-D-xylulose 5-phosphate (DXP) to produce the thiazole phosphate moiety of thiamine. Sulfur is provided by the thiocarboxylate moiety of the carrier protein ThiS. In vitro, sulfur can be provided by H(2)S. The protein is Thiazole synthase of Anaeromyxobacter sp. (strain Fw109-5).